Reading from the N-terminus, the 299-residue chain is Acarbose 7(IV)-phosphotransferase (299 aa).

Belongs to the carbohydrate kinase PfkB family.

The enzyme catalyses acarbose + ATP = acarbose 7(IV)-phosphate + ADP + H(+). Its function is as follows. Catalyzes the phosphorylation of the alpha-glucosidase inhibitor acarbose. Phosphorylation of acarbose could be a resistance-like self-protection mechanism. The chain is Acarbose 7(IV)-phosphotransferase from Actinoplanes sp. (strain ATCC 31044 / CBS 674.73 / SE50/110).